Here is a 120-residue protein sequence, read N- to C-terminus: U15-barytoxin-Tl1c (120 aa).

The N-terminal stretch at 1-16 is a signal peptide; sequence MKLFMVLVASFAFAVA. 4 disulfide bridges follow: Cys55/Cys73, Cys66/Cys79, Cys70/Cys118, and Cys72/Cys89.

This sequence belongs to the neurotoxin 03 (Tx2) family. 03 subfamily. In terms of tissue distribution, expressed by the venom gland.

It localises to the secreted. In terms of biological role, ion channel inhibitor. This Trittame loki (Brush-footed trapdoor spider) protein is U15-barytoxin-Tl1c.